The primary structure comprises 420 residues: Serine hydroxymethyltransferase (420 aa).

(6S)-5,6,7,8-tetrahydrofolate-binding positions include Leu-121 and 125 to 127; that span reads GHL. Lys-229 bears the N6-(pyridoxal phosphate)lysine mark.

This sequence belongs to the SHMT family. As to quaternary structure, homodimer. The cofactor is pyridoxal 5'-phosphate.

It localises to the cytoplasm. It carries out the reaction (6R)-5,10-methylene-5,6,7,8-tetrahydrofolate + glycine + H2O = (6S)-5,6,7,8-tetrahydrofolate + L-serine. Its pathway is one-carbon metabolism; tetrahydrofolate interconversion. It participates in amino-acid biosynthesis; glycine biosynthesis; glycine from L-serine: step 1/1. Its function is as follows. Catalyzes the reversible interconversion of serine and glycine with tetrahydrofolate (THF) serving as the one-carbon carrier. This reaction serves as the major source of one-carbon groups required for the biosynthesis of purines, thymidylate, methionine, and other important biomolecules. Also exhibits THF-independent aldolase activity toward beta-hydroxyamino acids, producing glycine and aldehydes, via a retro-aldol mechanism. This is Serine hydroxymethyltransferase from Streptomyces coelicolor (strain ATCC BAA-471 / A3(2) / M145).